The chain runs to 21 residues: Glutathione S-transferase 1 (21 aa).

The protein belongs to the GST superfamily. Phi family.

It catalyses the reaction RX + glutathione = an S-substituted glutathione + a halide anion + H(+). Conjugation of reduced glutathione to a wide number of exogenous and endogenous hydrophobic electrophiles. In plants, may have a detoxification role against certain herbicides. This Populus euphratica (Euphrates poplar) protein is Glutathione S-transferase 1.